We begin with the raw amino-acid sequence, 138 residues long: Basic phospholipase A2 ammodytoxin C (138 aa).

Positions 1-16 (MRTLWIVAVCLIGVEG) are cleaved as a signal peptide. Cystine bridges form between cysteine 42–cysteine 131, cysteine 44–cysteine 60, cysteine 59–cysteine 111, cysteine 65–cysteine 138, cysteine 66–cysteine 104, cysteine 73–cysteine 97, and cysteine 91–cysteine 102. 3 residues coordinate Ca(2+): tyrosine 43, glycine 45, and glycine 47. Histidine 63 is an active-site residue. Ca(2+) is bound at residue aspartate 64. Aspartate 105 is an active-site residue.

It belongs to the phospholipase A2 family. Group II subfamily. D49 sub-subfamily. As to quaternary structure, monomer. Binds to calmodulin, coagulation factor X (F10), 14-3-3 proteins gamma (YWHAG) and epsilon (YWHAE), and R25, a mitochondrial membrane protein. May bind to M-type PLA2 receptor (R-180). Ca(2+) is required as a cofactor. In terms of tissue distribution, expressed by the venom gland.

The protein resides in the secreted. It localises to the host cytoplasm. It is found in the host cytosol. The catalysed reaction is a 1,2-diacyl-sn-glycero-3-phosphocholine + H2O = a 1-acyl-sn-glycero-3-phosphocholine + a fatty acid + H(+). Functionally, snake venom phospholipase A2 (PLA2) that acts as a presynaptic neurotoxin, an inhibitor of blood coagulation, and has been found to bind with high affinity to intracellular proteins. The response of indirectly stimulated neuromuscular preparations to ammodytoxin (Atx) is triphasic. The first phase, the transient inhibition of the acetylcholine (ACh) release, starts soon after the addition of Atx and lasts for several minutes. This phase is probably independent of Atx enzymatic activity. The effect may be due to the specific binding of the toxin to presynaptic receptors. These receptors, called N-type receptors, are still unidentified. It is noteworthy that a neuronal isoform of the M-type PLA2 receptor (R180) has been identified as a high-affinity receptor for Atx in neuronal plasma membranes. It was demonstrated however that this receptor is not essential for expression of neurotoxicity by Atx. The second phase corresponds to an augmentation of neurotransmitter release. A peak is reached 10-20 minutes after exposure of the preparation to Atx and is followed by a gradual reduction. In this phase, the enzymatic activity of Atx of the mammalian is not significant. It is speculated that the increased release of neurotransmitter in this phase is induced by the interference of Atx with voltage-gated potassium channels. Measurements of ionic showed however that voltage-gated potassium channels are not affected by Atx. The third phase of the response of neuromuscular preparations to Atx, which corresponds to a complete and irreversible paralysis, is clearly dependent on the hydrolytic activity of the toxin. In addition to its presynaptic neurotoxicity, Atx shows an anticoagulant activity by binding with high affinity to activated coagulation factor X (F10) thus inhibiting the formation of the prothrombinase complex (FX/FV) and its activity (IC(50) is 240 nM). Surprisingly, Atx was discovered to bind intracellular proteins such as calmodulin (CaM), 14-3-3 proteins gamma (YWHAG) and epsilon (YWHAE), as well as R25, a mitochondrial integral membrane protein found in cerebral cortex. These findings raised a doubt about the dogma of the exclusively extracellular action of PLA2s, defended by the potential instability of these molecules in the reducing environment of the eukaryotic cytosol coupled with their possible inability to act as enzymes in this cellular compartment, due to too low concentration of calcium ions. This hypothesis was challenged efficiently by demonstrating the internalization of AtxA into a culture cells, but still remains to be directly demonstrated in vivo. PLA2 catalyzes the calcium-dependent hydrolysis of the 2-acyl groups in 3-sn-phosphoglycerides. This is Basic phospholipase A2 ammodytoxin C from Vipera ammodytes ammodytes (Western sand viper).